Reading from the N-terminus, the 207-residue chain is Killer cell lectin-like receptor subfamily F member 2 (207 aa).

The Cytoplasmic portion of the chain corresponds to 1-30; it reads MENEDGYMTLSFKNRCKSKQKSKDFSLYPQ. The residue at position 7 (Y7) is a Phosphotyrosine. The chain crosses the membrane as a helical; Signal-anchor for type II membrane protein span at residues 31–51; that stretch reads YYCLLLIFGCIVILIFIMTGI. Residues 52–207 lie on the Extracellular side of the membrane; it reads DLKFWHKKMD…ILTHNGTSGV (156 aa). N-linked (GlcNAc...) asparagine glycosylation occurs at N67. 3 cysteine pairs are disulfide-bonded: C78/C89, C106/C193, and C172/C185. The C-type lectin domain maps to 85–194; the sequence is NEGKCYWFST…CSSTFKGICQ (110 aa). A glycan (N-linked (GlcNAc...) asparagine) is linked at N202.

As to quaternary structure, homodimer; non-disulfide-linked. Interacts with CLEC2A. In terms of processing, N-glycosylated.

It is found in the cell membrane. Functionally, C-type lectin-like receptor involved in natural killer cell mediated cytotoxicity and cytokine secretion in keratinocytes via its interaction with CLEC2A. Triggers degranulation in a SYK-dependent manner and stimulates SYK phosphotyrosinylation without recruiting SYK directly. This Homo sapiens (Human) protein is Killer cell lectin-like receptor subfamily F member 2 (KLRF2).